The sequence spans 376 residues: MSNKSVLLIAGEPSGDLLGAHLAQSLKSLEPNLKLAGMGGKRMREAGVEVFINADKLAVVGLLEILRQFRDIRHAMQTLKRYFKKTPPDLVVFIDYPGFNLHMAKQAKKAGIKVLYYVSPQIWAWRYGRIKKIKKYVDHMAVLFDFEEKLYQKENVPVSFVGHPLANAPTPSLSRNEICKQFNLDPDKPIVALFPGSREQEINKLLPMMVQAGKLIQTQIPTVQFILPLALNLALDKIRPFLSPEIKVIQNDISHVLAIAHAAVAASGTVTLEIALQQVPLVIIYKVAPLTFWLGKKLIRLSFIGLCNLVSPEPVAVELLQQDATPQAIADEVFQLLNNHNYRQSIIGKLGHLRPQLDRGNAAQNVAKVVHNLIFS.

It belongs to the LpxB family.

The enzyme catalyses a lipid X + a UDP-2-N,3-O-bis[(3R)-3-hydroxyacyl]-alpha-D-glucosamine = a lipid A disaccharide + UDP + H(+). It functions in the pathway bacterial outer membrane biogenesis; LPS lipid A biosynthesis. Functionally, condensation of UDP-2,3-diacylglucosamine and 2,3-diacylglucosamine-1-phosphate to form lipid A disaccharide, a precursor of lipid A, a phosphorylated glycolipid that anchors the lipopolysaccharide to the outer membrane of the cell. The sequence is that of Lipid-A-disaccharide synthase from Coxiella burnetii (strain Dugway 5J108-111).